The chain runs to 303 residues: Mycothiol acetyltransferase (303 aa).

N-acetyltransferase domains are found at residues 3–152 and 155–303; these read VTVT…VSLP and VRIR…MYRS. A 1D-myo-inositol 2-(L-cysteinylamino)-2-deoxy-alpha-D-glucopyranoside-binding site is contributed by Asp-35. 79–81 contacts acetyl-CoA; the sequence is LTV. Residues Glu-182, Lys-224, and Glu-237 each coordinate 1D-myo-inositol 2-(L-cysteinylamino)-2-deoxy-alpha-D-glucopyranoside. Acetyl-CoA-binding positions include 241-243 and 248-254; these read VGV and QGSGLGR. Tyr-275 is a binding site for 1D-myo-inositol 2-(L-cysteinylamino)-2-deoxy-alpha-D-glucopyranoside.

The protein belongs to the acetyltransferase family. MshD subfamily. As to quaternary structure, monomer.

The enzyme catalyses 1D-myo-inositol 2-(L-cysteinylamino)-2-deoxy-alpha-D-glucopyranoside + acetyl-CoA = mycothiol + CoA + H(+). In terms of biological role, catalyzes the transfer of acetyl from acetyl-CoA to desacetylmycothiol (Cys-GlcN-Ins) to form mycothiol. This is Mycothiol acetyltransferase from Kocuria rhizophila (strain ATCC 9341 / DSM 348 / NBRC 103217 / DC2201).